The sequence spans 481 residues: Aspartyl/glutamyl-tRNA(Asn/Gln) amidotransferase subunit B (481 aa).

It belongs to the GatB/GatE family. GatB subfamily. In terms of assembly, heterotrimer of A, B and C subunits.

The catalysed reaction is L-glutamyl-tRNA(Gln) + L-glutamine + ATP + H2O = L-glutaminyl-tRNA(Gln) + L-glutamate + ADP + phosphate + H(+). It catalyses the reaction L-aspartyl-tRNA(Asn) + L-glutamine + ATP + H2O = L-asparaginyl-tRNA(Asn) + L-glutamate + ADP + phosphate + 2 H(+). Allows the formation of correctly charged Asn-tRNA(Asn) or Gln-tRNA(Gln) through the transamidation of misacylated Asp-tRNA(Asn) or Glu-tRNA(Gln) in organisms which lack either or both of asparaginyl-tRNA or glutaminyl-tRNA synthetases. The reaction takes place in the presence of glutamine and ATP through an activated phospho-Asp-tRNA(Asn) or phospho-Glu-tRNA(Gln). This is Aspartyl/glutamyl-tRNA(Asn/Gln) amidotransferase subunit B from Ehrlichia ruminantium (strain Gardel).